A 507-amino-acid chain; its full sequence is Putative thymidine phosphorylase (507 aa).

The protein belongs to the thymidine/pyrimidine-nucleoside phosphorylase family. Type 2 subfamily.

It carries out the reaction thymidine + phosphate = 2-deoxy-alpha-D-ribose 1-phosphate + thymine. This is Putative thymidine phosphorylase from Ralstonia nicotianae (strain ATCC BAA-1114 / GMI1000) (Ralstonia solanacearum).